Here is a 580-residue protein sequence, read N- to C-terminus: Adenine deaminase 2 (580 aa).

This sequence belongs to the metallo-dependent hydrolases superfamily. Adenine deaminase family. Mn(2+) serves as cofactor.

The enzyme catalyses adenine + H2O + H(+) = hypoxanthine + NH4(+). The protein is Adenine deaminase 2 of Latilactobacillus sakei subsp. sakei (strain 23K) (Lactobacillus sakei subsp. sakei).